The chain runs to 143 residues: Nucleoside diphosphate kinase (143 aa).

Positions 11, 59, 87, 93, 104, and 114 each coordinate ATP. Residue His117 is the Pros-phosphohistidine intermediate of the active site.

It belongs to the NDK family. Homotetramer. Mg(2+) is required as a cofactor.

The protein localises to the cytoplasm. The catalysed reaction is a 2'-deoxyribonucleoside 5'-diphosphate + ATP = a 2'-deoxyribonucleoside 5'-triphosphate + ADP. The enzyme catalyses a ribonucleoside 5'-diphosphate + ATP = a ribonucleoside 5'-triphosphate + ADP. Major role in the synthesis of nucleoside triphosphates other than ATP. The ATP gamma phosphate is transferred to the NDP beta phosphate via a ping-pong mechanism, using a phosphorylated active-site intermediate. This is Nucleoside diphosphate kinase from Salmonella arizonae (strain ATCC BAA-731 / CDC346-86 / RSK2980).